The primary structure comprises 206 residues: Small ribosomal subunit protein uS4A (206 aa).

An S4 RNA-binding domain is found at 98–164 (MRLDNVVYKL…EKFKTFAENP (67 aa)).

This sequence belongs to the universal ribosomal protein uS4 family. As to quaternary structure, part of the 30S ribosomal subunit. Contacts protein S5. The interaction surface between S4 and S5 is involved in control of translational fidelity.

Its function is as follows. One of the primary rRNA binding proteins, it binds directly to 16S rRNA where it nucleates assembly of the body of the 30S subunit. With S5 and S12 plays an important role in translational accuracy. This chain is Small ribosomal subunit protein uS4A, found in Clostridium novyi (strain NT).